A 524-amino-acid polypeptide reads, in one-letter code: Excitatory amino acid transporter 3 (524 aa).

At 1–18 the chain is on the cytoplasmic side; it reads MGKPARKGCEWKRFLKNN. Residues 19–38 form a helical membrane-spanning segment; it reads WVLLSTVAAVVLGITTGVLV. At 39 to 61 the chain is on the extracellular side; the sequence is REHSNLSTLEKFYFAFPGEILMR. Residue asparagine 43 is glycosylated (N-linked (GlcNAc...) asparagine). The helical transmembrane segment at 62–82 threads the bilayer; it reads MLKLIILPLIISSMITGVAAL. Residues 83–93 are Cytoplasmic-facing; the sequence is DSNVSGKIGLR. The helical transmembrane segment at 94–114 threads the bilayer; sequence AVVYYFCTTLIAVILGIVLVV. Tyrosine 98, threonine 101, and threonine 102 together coordinate Na(+). The Extracellular segment spans residues 115–205; it reads SIKPGVTQKV…KTKEYKIVGM (91 aa). N-linked (GlcNAc...) asparagine glycosylation is found at asparagine 178 and asparagine 195. Residues 206–229 traverse the membrane as a helical segment; the sequence is YSDGINVLGLIVFCLVFGLVIGKM. Topologically, residues 230–238 are cytoplasmic; sequence GEKGQILVD. A helical membrane pass occupies residues 239–266; that stretch reads FFNALSDATMKIVQIIMCYMPLGILFLI. Residues 267-286 are Extracellular-facing; sequence AGKIIEVEDWEIFRKLGLYM. A helical membrane pass occupies residues 287-308; it reads ATVLTGLAIHSIVILPLIYFIV. Over 309–313 the chain is Cytoplasmic; sequence VRKNP. Positions 314 to 344 form an intramembrane region, discontinuously helical; sequence FRFAMGMAQALLTALMISSSSATLPVTFRCA. L-aspartate contacts are provided by serine 331 and serine 333. Over 345–353 the chain is Cytoplasmic; the sequence is EENNQVDKR. The chain crosses the membrane as a helical span at residues 354-380; the sequence is ITRFVLPVGATINMDGTALYEAVAAVF. Na(+) is bound by residues glycine 362, threonine 364, asparagine 366, and aspartate 368. Threonine 370 is a binding site for L-aspartate. Residues 381–393 lie on the Extracellular side of the membrane; that stretch reads IAQLNDLDLGIGQ. Positions 394–427 form an intramembrane region, discontinuously helical; sequence IITISITATSASIGAAGVPQAGLVTMVIVLSAVG. Residues serine 405, isoleucine 406, and alanine 408 each coordinate Na(+). Valine 411 provides a ligand contact to L-aspartate. The Extracellular portion of the chain corresponds to 428-440; that stretch reads LPAEDVTLIIAVD. Residues 441–462 traverse the membrane as a helical segment; the sequence is WLLDRFRTMVNVLGDAFGTGIV. L-aspartate is bound by residues arginine 447, threonine 448, and asparagine 451. 2 residues coordinate Na(+): asparagine 451 and aspartate 455. Topologically, residues 463 to 524 are cytoplasmic; the sequence is EKLSKKELEQ…TISFTQTSQF (62 aa). 2 positions are modified to phosphoserine: serine 517 and serine 522.

This sequence belongs to the dicarboxylate/amino acid:cation symporter (DAACS) (TC 2.A.23) family. SLC1A1 subfamily. In terms of assembly, homotrimer. Interacts with ARL6IP5. Interacts with RTN2 (via N-terminus); the interaction promotes cell surface expression of SLC1A1. Interacts with SORCS2; this interaction is important for normal expression at the cell membrane. In terms of processing, glycosylated. As to expression, expressed in all tissues tested including liver, muscle, testis, ovary, retinoblastoma cell line, neurons and brain (in which there was dense expression in substantia nigra, red nucleus, hippocampus and in cerebral cortical layers).

The protein localises to the cell membrane. It localises to the apical cell membrane. The protein resides in the synapse. Its subcellular location is the synaptosome. It is found in the early endosome membrane. The protein localises to the late endosome membrane. It localises to the recycling endosome membrane. The catalysed reaction is K(+)(in) + L-glutamate(out) + 3 Na(+)(out) + H(+)(out) = K(+)(out) + L-glutamate(in) + 3 Na(+)(in) + H(+)(in). It catalyses the reaction K(+)(in) + L-aspartate(out) + 3 Na(+)(out) + H(+)(out) = K(+)(out) + L-aspartate(in) + 3 Na(+)(in) + H(+)(in). The enzyme catalyses D-aspartate(out) + K(+)(in) + 3 Na(+)(out) + H(+)(out) = D-aspartate(in) + K(+)(out) + 3 Na(+)(in) + H(+)(in). It carries out the reaction K(+)(in) + L-cysteine(out) + 3 Na(+)(out) + H(+)(out) = K(+)(out) + L-cysteine(in) + 3 Na(+)(in) + H(+)(in). In terms of biological role, sodium-dependent, high-affinity amino acid transporter that mediates the uptake of L-glutamate and also L-aspartate and D-aspartate. Can also transport L-cysteine. Functions as a symporter that transports one amino acid molecule together with two or three Na(+) ions and one proton, in parallel with the counter-transport of one K(+) ion. Mediates Cl(-) flux that is not coupled to amino acid transport; this avoids the accumulation of negative charges due to aspartate and Na(+) symport. Plays an important role in L-glutamate and L-aspartate reabsorption in renal tubuli. Plays a redundant role in the rapid removal of released glutamate from the synaptic cleft, which is essential for terminating the postsynaptic action of glutamate. Contributes to glutathione biosynthesis and protection against oxidative stress via its role in L-glutamate and L-cysteine transport. Negatively regulated by ARL6IP5. The polypeptide is Excitatory amino acid transporter 3 (Homo sapiens (Human)).